A 76-amino-acid chain; its full sequence is Monocarboxylate transporter 1 (76 aa).

3 helical membrane passes run 1–18 (LSILAFVDMVARPSMGLA), 28–48 (IQYFFAASVVANGVCHLLAPL), and 53–73 (IGFCVYAGVFGFAFGWLSSVL). D8 contacts H(+). R12 serves as a coordination point for (S)-lactate.

It belongs to the major facilitator superfamily. Monocarboxylate porter (TC 2.A.1.13) family. In terms of assembly, interacts with BSG; interaction mediates SLC16A1 targeting to the plasma membrane. Interacts with EMB; interaction mediates SLC16A1 targeting to the plasma membrane.

Its subcellular location is the cell membrane. It is found in the basolateral cell membrane. The protein resides in the apical cell membrane. The catalysed reaction is (S)-lactate(in) + H(+)(in) = (S)-lactate(out) + H(+)(out). The enzyme catalyses acetate(out) + H(+)(out) = acetate(in) + H(+)(in). It carries out the reaction acetoacetate(out) + H(+)(out) = acetoacetate(in) + H(+)(in). It catalyses the reaction pyruvate(out) + H(+)(out) = pyruvate(in) + H(+)(in). The catalysed reaction is (R)-3-hydroxybutanoate(out) + H(+)(out) = (R)-3-hydroxybutanoate(in) + H(+)(in). The enzyme catalyses 3-methyl-2-oxobutanoate(out) + H(+)(out) = 3-methyl-2-oxobutanoate(in) + H(+)(in). It carries out the reaction 4-methyl-2-oxopentanoate(out) + H(+)(out) = 4-methyl-2-oxopentanoate(in) + H(+)(in). It catalyses the reaction succinate(in) + 2 H(+)(in) = succinate(out) + 2 H(+)(out). In terms of biological role, bidirectional proton-coupled monocarboxylate transporter. Catalyzes the rapid transport across the plasma membrane of many monocarboxylates such as lactate, pyruvate, acetate and the ketone bodies acetoacetate and beta-hydroxybutyrate, and thus contributes to the maintenance of intracellular pH. The transport direction is determined by the proton motive force and the concentration gradient of the substrate monocarboxylate. MCT1 is a major lactate exporter. Plays a role in cellular responses to a high-fat diet by modulating the cellular levels of lactate and pyruvate that contribute to the regulation of central metabolic pathways and insulin secretion, with concomitant effects on plasma insulin levels and blood glucose homeostasis. Facilitates the protonated monocarboxylate form of succinate export, that its transient protonation upon muscle cell acidification in exercising muscle and ischemic heart. Functions via alternate outward- and inward-open conformation states. Protonation and deprotonation is essential for the conformational transition. This Meriones unguiculatus (Mongolian jird) protein is Monocarboxylate transporter 1 (SLC16A1).